The sequence spans 140 residues: Large ribosomal subunit protein uL11 (140 aa).

The protein belongs to the universal ribosomal protein uL11 family. In terms of assembly, part of the ribosomal stalk of the 50S ribosomal subunit. Interacts with L10 and the large rRNA to form the base of the stalk. L10 forms an elongated spine to which L12 dimers bind in a sequential fashion forming a multimeric L10(L12)X complex. Post-translationally, one or more lysine residues are methylated.

Forms part of the ribosomal stalk which helps the ribosome interact with GTP-bound translation factors. The sequence is that of Large ribosomal subunit protein uL11 from Lawsonia intracellularis (strain PHE/MN1-00).